A 259-amino-acid polypeptide reads, in one-letter code: 14-3-3-like protein (259 aa).

The disordered stretch occupies residues aspartate 237 to glutamine 259. Residues arginine 247–glutamine 259 show a composition bias toward basic and acidic residues.

It belongs to the 14-3-3 family. As to expression, leaves specific.

In Solanum tuberosum (Potato), this protein is 14-3-3-like protein.